An 88-amino-acid polypeptide reads, in one-letter code: Large ribosomal subunit protein bL31 (88 aa).

A disordered region spans residues 67-88; that stretch reads MGSVDNATSEKKSATDETSKES. Residues 74–88 show a composition bias toward basic and acidic residues; the sequence is TSEKKSATDETSKES.

Belongs to the bacterial ribosomal protein bL31 family. Type A subfamily. Part of the 50S ribosomal subunit.

Functionally, binds the 23S rRNA. The sequence is that of Large ribosomal subunit protein bL31 from Synechococcus sp. (strain CC9311).